A 277-amino-acid polypeptide reads, in one-letter code: Phosphonates import ATP-binding protein PhnC 2 (277 aa).

The 249-residue stretch at 5–253 folds into the ABC transporter domain; the sequence is IHVQGLNKTF…FLNDLYGADA (249 aa). 37–44 lines the ATP pocket; it reads GASGSGKS.

The protein belongs to the ABC transporter superfamily. Phosphonates importer (TC 3.A.1.9.1) family. As to quaternary structure, the complex is composed of two ATP-binding proteins (PhnC), two transmembrane proteins (PhnE) and a solute-binding protein (PhnD).

It localises to the cell inner membrane. The enzyme catalyses phosphonate(out) + ATP + H2O = phosphonate(in) + ADP + phosphate + H(+). In terms of biological role, part of the ABC transporter complex PhnCDE involved in phosphonates import. Responsible for energy coupling to the transport system. This chain is Phosphonates import ATP-binding protein PhnC 2, found in Pseudomonas syringae pv. syringae (strain B728a).